Reading from the N-terminus, the 1036-residue chain is Mitogen-activated protein kinase kinase kinase 21 (1036 aa).

The disordered stretch occupies residues 1–36 (MALRGAAGATDTPVSSAGGAPGGSASSSSTSSGGSA). Positions 15-36 (SSAGGAPGGSASSSSTSSGGSA) are enriched in low complexity. In terms of domain architecture, SH3 spans 38-102 (AGAGLWAALY…PANYVAPCRP (65 aa)). The region spanning 124–401 (LELKELIGAG…ALILEQLTAI (278 aa)) is the Protein kinase domain. Residues 130-138 (IGAGGFGQV) and lysine 151 contribute to the ATP site. Residue aspartate 263 is the Proton acceptor of the active site. Threonine 299 carries the phosphothreonine; by autocatalysis modification. Position 303 is a phosphoserine; by autocatalysis and MAP4K1 (serine 303). Leucine-zipper stretches follow at residues 425-446 (IQQMFDELRTKEKELRSREEEL) and 460-481 (LKRREQQLAEREIDVLERELNI). Residues 517–551 (SDFQHKITVQASPNLDKRRSLNSSSSSPPSSPTMM) form a disordered region. Phosphoserine is present on residues serine 528, serine 543, and serine 547. Threonine 592 bears the Phosphothreonine mark. The residue at position 614 (serine 614) is a Phosphoserine. Positions 748-763 (AEEPLPKEEKKKREGI) are enriched in basic and acidic residues. 2 disordered regions span residues 748 to 791 (AEEP…SSPP) and 923 to 954 (PHSHLPREVSPKKHSTVHIVPQRRPASLRSRS).

Belongs to the protein kinase superfamily. STE Ser/Thr protein kinase family. MAP kinase kinase kinase subfamily. In terms of assembly, homodimer. Interacts with TLR4. Mg(2+) serves as cofactor. Post-translationally, autophosphorylation on serine and threonine residues within the activation loop plays a role in enzyme activation.

The enzyme catalyses L-seryl-[protein] + ATP = O-phospho-L-seryl-[protein] + ADP + H(+). The catalysed reaction is L-threonyl-[protein] + ATP = O-phospho-L-threonyl-[protein] + ADP + H(+). Its activity is regulated as follows. Homodimerization via the leucine zipper domains is required for autophosphorylation and subsequent activation. Its function is as follows. Negative regulator of TLR4 signaling. Does not activate JNK1/MAPK8 pathway, p38/MAPK14, nor ERK2/MAPK1 pathways. The protein is Mitogen-activated protein kinase kinase kinase 21 of Homo sapiens (Human).